A 591-amino-acid chain; its full sequence is Protein NRT1/ PTR FAMILY 1.1 (591 aa).

The next 11 membrane-spanning stretches (helical) occupy residues threonine 68–serine 88, isoleucine 98–leucine 118, serine 139–isoleucine 159, phenylalanine 186–valine 206, isoleucine 216–serine 236, leucine 329–valine 349, isoleucine 374–tyrosine 394, methionine 418–tyrosine 438, alanine 460–glycine 480, isoleucine 496–leucine 516, and tyrosine 543–tryptophan 563.

It belongs to the major facilitator superfamily. Proton-dependent oligopeptide transporter (POT/PTR) (TC 2.A.17) family. As to expression, expressed in siliques, shoots and roots. Mainly detected in larger expanded leaves, in the companion cells of major veins.

It localises to the cell membrane. In terms of biological role, low-affinity nitrate transporter involved in xylem-to-phloem transfer for redistributing nitrate into developing leaves. Not involved in dipeptides transport. The sequence is that of Protein NRT1/ PTR FAMILY 1.1 (NPF1.1) from Arabidopsis thaliana (Mouse-ear cress).